Consider the following 320-residue polypeptide: GTPase Era (320 aa).

Residues 25–193 form the Era-type G domain; that stretch reads HCGFIAIVGR…RKHVRNHLPK (169 aa). Residues 33-40 form a G1 region; that stretch reads GRPNVGKS. 33 to 40 lines the GTP pocket; that stretch reads GRPNVGKS. The segment at 59–63 is G2; sequence QTTRH. The interval 80–83 is G3; the sequence is DTPG. GTP contacts are provided by residues 80–84 and 142–145; these read DTPGL and NKVD. The segment at 142 to 145 is G4; it reads NKVD. The interval 172 to 174 is G5; it reads ISA. One can recognise a KH type-2 domain in the interval 216 to 302; it reads VREKLMRFTG…YLETWVKVKS (87 aa).

Belongs to the TRAFAC class TrmE-Era-EngA-EngB-Septin-like GTPase superfamily. Era GTPase family. Monomer.

It localises to the cytoplasm. It is found in the cell inner membrane. Its function is as follows. An essential GTPase that binds both GDP and GTP, with rapid nucleotide exchange. Plays a role in 16S rRNA processing and 30S ribosomal subunit biogenesis and possibly also in cell cycle regulation and energy metabolism. The polypeptide is GTPase Era (Vibrio parahaemolyticus serotype O3:K6 (strain RIMD 2210633)).